Here is a 73-residue protein sequence, read N- to C-terminus: Sec-independent protein translocase protein TatA (73 aa).

Residues Met1–Gly21 traverse the membrane as a helical segment. The disordered stretch occupies residues Met43–Gln73.

It belongs to the TatA/E family. The Tat system comprises two distinct complexes: a TatABC complex, containing multiple copies of TatA, TatB and TatC subunits, and a separate TatA complex, containing only TatA subunits. Substrates initially bind to the TatABC complex, which probably triggers association of the separate TatA complex to form the active translocon.

It localises to the cell inner membrane. Its function is as follows. Part of the twin-arginine translocation (Tat) system that transports large folded proteins containing a characteristic twin-arginine motif in their signal peptide across membranes. TatA could form the protein-conducting channel of the Tat system. The chain is Sec-independent protein translocase protein TatA from Cupriavidus pinatubonensis (strain JMP 134 / LMG 1197) (Cupriavidus necator (strain JMP 134)).